A 344-amino-acid chain; its full sequence is GTP 3',8-cyclase (344 aa).

The Radical SAM core domain maps to 19 to 245 (PFGRAVTYLR…DIPYRTGGPA (227 aa)). Arg28 contacts GTP. [4Fe-4S] cluster is bound by residues Cys35 and Cys39. Tyr41 lines the S-adenosyl-L-methionine pocket. [4Fe-4S] cluster is bound at residue Cys42. Arg77 is a GTP binding site. Gly81 is an S-adenosyl-L-methionine binding site. Thr111 provides a ligand contact to GTP. S-adenosyl-L-methionine is bound at residue Ser135. Lys171 is a GTP binding site. Residue Met205 participates in S-adenosyl-L-methionine binding. Residues Cys268 and Cys271 each coordinate [4Fe-4S] cluster. 273-275 (RVR) provides a ligand contact to GTP. Cys285 contributes to the [4Fe-4S] cluster binding site.

It belongs to the radical SAM superfamily. MoaA family. Monomer and homodimer. Requires [4Fe-4S] cluster as cofactor.

The catalysed reaction is GTP + AH2 + S-adenosyl-L-methionine = (8S)-3',8-cyclo-7,8-dihydroguanosine 5'-triphosphate + 5'-deoxyadenosine + L-methionine + A + H(+). It participates in cofactor biosynthesis; molybdopterin biosynthesis. Functionally, catalyzes the cyclization of GTP to (8S)-3',8-cyclo-7,8-dihydroguanosine 5'-triphosphate. This Brucella abortus (strain S19) protein is GTP 3',8-cyclase.